The primary structure comprises 757 residues: 5-methyltetrahydropteroyltriglutamate--homocysteine methyltransferase (757 aa).

Residues 15-18 (RELK) and K114 contribute to the 5-methyltetrahydropteroyltri-L-glutamate site. L-homocysteine is bound by residues 428–430 (IGS) and E481. L-methionine is bound by residues 428 to 430 (IGS) and E481. Residues 512 to 513 (RC) and W558 contribute to the 5-methyltetrahydropteroyltri-L-glutamate site. D596 contacts L-homocysteine. Residue D596 coordinates L-methionine. E602 is a 5-methyltetrahydropteroyltri-L-glutamate binding site. Zn(2+) is bound by residues H639, C641, and E663. Catalysis depends on H692, which acts as the Proton donor. Position 724 (C724) interacts with Zn(2+).

The protein belongs to the vitamin-B12 independent methionine synthase family. Zn(2+) is required as a cofactor.

The catalysed reaction is 5-methyltetrahydropteroyltri-L-glutamate + L-homocysteine = tetrahydropteroyltri-L-glutamate + L-methionine. It participates in amino-acid biosynthesis; L-methionine biosynthesis via de novo pathway; L-methionine from L-homocysteine (MetE route): step 1/1. In terms of biological role, catalyzes the transfer of a methyl group from 5-methyltetrahydrofolate to homocysteine resulting in methionine formation. The polypeptide is 5-methyltetrahydropteroyltriglutamate--homocysteine methyltransferase (Lactococcus lactis subsp. cremoris (strain SK11)).